A 386-amino-acid polypeptide reads, in one-letter code: 23S rRNA (uracil(747)-C(5))-methyltransferase RlmC (386 aa).

[4Fe-4S] cluster is bound by residues Cys-7, Cys-15, Cys-18, and Cys-94. Residues Gln-219, Phe-248, Glu-269, and Asn-316 each contribute to the S-adenosyl-L-methionine site. The Nucleophile role is filled by Cys-343.

This sequence belongs to the class I-like SAM-binding methyltransferase superfamily. RNA M5U methyltransferase family. RlmC subfamily.

It carries out the reaction uridine(747) in 23S rRNA + S-adenosyl-L-methionine = 5-methyluridine(747) in 23S rRNA + S-adenosyl-L-homocysteine + H(+). In terms of biological role, catalyzes the formation of 5-methyl-uridine at position 747 (m5U747) in 23S rRNA. This is 23S rRNA (uracil(747)-C(5))-methyltransferase RlmC from Shewanella oneidensis (strain ATCC 700550 / JCM 31522 / CIP 106686 / LMG 19005 / NCIMB 14063 / MR-1).